Consider the following 2773-residue polypeptide: Peramine synthetase A (2773 aa).

The adenylation 1 stretch occupies residues 246–644; the sequence is FEDQVYSQPL…GRKDAQVKIR (399 aa). Residues 774–850 enclose the Carrier 1 domain; the sequence is QPTCEMEERM…DLAKNCSQTL (77 aa). O-(pantetheine 4'-phosphoryl)serine is present on Ser-811. The condensation stretch occupies residues 888–1301; the sequence is QDAYPCTRLQ…MSSAEDLEQI (414 aa). The interval 1321 to 1720 is adenylation 2; that stretch reads ADQVQARPDS…GRKDTQVKVR (400 aa). Positions 1810-1949 are methylation (Met) domain; sequence IGRDFVGWSS…IIQHLASLGS (140 aa). Residues 2250–2271 are disordered; the sequence is MLSESLQQKAPPTARKRLPSTA. Residues 2267-2345 form the Carrier 2 domain; the sequence is LPSTAPERAM…HLLQTAAAGV (79 aa). Position 2304 is an O-(pantetheine 4'-phosphoryl)serine (Ser-2304). The interval 2397-2715 is thiesterase (TE) domain; it reads TVVLTGANGF…LQDLADTARS (319 aa).

Belongs to the NRP synthetase family. The cofactor is pantetheine 4'-phosphate.

It catalyses the reaction (S)-1-pyrroline-5-carboxylate + L-arginine + S-adenosyl-L-methionine + 2 ATP = peramine + 2 AMP + S-adenosyl-L-homocysteine + 2 diphosphate + H2O + 2 H(+). Its function is as follows. Nonribosomal peptide synthetase involved in the biosynthesis of peramine, a pyrrolopyrazine synthesized in association with the grass host that protects the plant from insect herbivory. The single multifunctional NRPS perA seems to be responsible for all catalytic steps in the biosynthesis of peramine. The condensation domain of perA is proposed to catalyze formation of a peptide bond between 1-pyrroline-5-carboxylate and arginine. The methylation domain of perA would catalyze the N-methylation of the alpha-amino group of arginine. The reductase domain is proposed to be responsible for reduction of the thioester and the cyclization to form an iminium ion resulting in release from the peptide synthetase. Deprotonation of this intermediate and oxidation of the pyrroline ring would give rise to peramine. This final oxidation to give the pyrrole functionality may be spontaneous. The protein is Peramine synthetase A of Epichloe festucae (strain Fl1).